The sequence spans 444 residues: Tryptophan 5-hydroxylase 1 (444 aa).

In terms of domain architecture, ACT spans 19–94; it reads TLIFSLKNEV…NVLSVTPPDN (76 aa). Position 58 is a phosphoserine; by PKA (Ser-58). Positions 235, 257, and 265 each coordinate L-tryptophan. Fe cation is bound by residues His-272, His-277, and Glu-317. Residues Ser-336 and Ile-366 each coordinate L-tryptophan.

Belongs to the biopterin-dependent aromatic amino acid hydroxylase family. Homotetramer. Interacts with DNAJC12. The cofactor is Fe(2+). Ubiquitinated, leading to its degradation by the proteasome. Ubiquitinated is triggered by phosphorylation. Post-translationally, phosphorylated; triggering degradation by the proteasome.

The catalysed reaction is (6R)-L-erythro-5,6,7,8-tetrahydrobiopterin + L-tryptophan + O2 = 5-hydroxy-L-tryptophan + (4aS,6R)-4a-hydroxy-L-erythro-5,6,7,8-tetrahydrobiopterin. It participates in aromatic compound metabolism; serotonin biosynthesis; serotonin from L-tryptophan: step 1/2. Functionally, oxidizes L-tryptophan to 5-hydroxy-l-tryptophan in the rate-determining step of serotonin biosynthesis. The protein is Tryptophan 5-hydroxylase 1 (TPH1) of Oryctolagus cuniculus (Rabbit).